Reading from the N-terminus, the 204-residue chain is Quinol oxidase subunit 3 (204 aa).

The next 6 membrane-spanning stretches (helical) occupy residues 27 to 47 (FWIF…TFFV), 66 to 86 (LVMI…IAVH), 95 to 115 (GVVI…GCEI), 118 to 138 (FVHY…SGFF), 140 to 160 (LLGT…GILI), and 184 to 204 (FLDV…LGGL).

It belongs to the cytochrome c oxidase subunit 3 family.

The protein resides in the cell membrane. The enzyme catalyses 2 a quinol + O2 = 2 a quinone + 2 H2O. In terms of biological role, catalyzes quinol oxidation with the concomitant reduction of oxygen to water. Major component for energy conversion during vegetative growth. This is Quinol oxidase subunit 3 (qoxC) from Bacillus subtilis (strain 168).